The following is a 337-amino-acid chain: Protein RecA (337 aa).

66-73 (GPESSGKT) lines the ATP pocket.

The protein belongs to the RecA family.

The protein localises to the cytoplasm. In terms of biological role, can catalyze the hydrolysis of ATP in the presence of single-stranded DNA, the ATP-dependent uptake of single-stranded DNA by duplex DNA, and the ATP-dependent hybridization of homologous single-stranded DNAs. It interacts with LexA causing its activation and leading to its autocatalytic cleavage. This Mesomycoplasma hyopneumoniae (strain 232) (Mycoplasma hyopneumoniae) protein is Protein RecA.